A 688-amino-acid chain; its full sequence is UvrABC system protein B (688 aa).

The 158-residue stretch at 31–188 folds into the Helicase ATP-binding domain; that stretch reads GRVNAGEPDV…RKFVSMQYQR (158 aa). 44 to 51 lines the ATP pocket; the sequence is GATGTGKS. The Beta-hairpin signature appears at 97-120; sequence YYDYYQPEAYVPQTDTFIEKDSSV. In terms of domain architecture, Helicase C-terminal spans 434 to 587; sequence QIDDLLEQIR…QVAYNTEHGI (154 aa). Residues 607 to 632 are disordered; it reads GEDTKKMLEGRGGGKRSPTPNLRREG. Positions 642–677 constitute a UVR domain; the sequence is ETIISDLNDQMLQAAGELKFELAARLRDELGDLKRE.

The protein belongs to the UvrB family. In terms of assembly, forms a heterotetramer with UvrA during the search for lesions. Interacts with UvrC in an incision complex.

It localises to the cytoplasm. Functionally, the UvrABC repair system catalyzes the recognition and processing of DNA lesions. A damage recognition complex composed of 2 UvrA and 2 UvrB subunits scans DNA for abnormalities. Upon binding of the UvrA(2)B(2) complex to a putative damaged site, the DNA wraps around one UvrB monomer. DNA wrap is dependent on ATP binding by UvrB and probably causes local melting of the DNA helix, facilitating insertion of UvrB beta-hairpin between the DNA strands. Then UvrB probes one DNA strand for the presence of a lesion. If a lesion is found the UvrA subunits dissociate and the UvrB-DNA preincision complex is formed. This complex is subsequently bound by UvrC and the second UvrB is released. If no lesion is found, the DNA wraps around the other UvrB subunit that will check the other stand for damage. This chain is UvrABC system protein B, found in Clavibacter michiganensis subsp. michiganensis (strain NCPPB 382).